Consider the following 291-residue polypeptide: ATP synthase gamma chain (291 aa).

It belongs to the ATPase gamma chain family. As to quaternary structure, F-type ATPases have 2 components, CF(1) - the catalytic core - and CF(0) - the membrane proton channel. CF(1) has five subunits: alpha(3), beta(3), gamma(1), delta(1), epsilon(1). CF(0) has three main subunits: a, b and c.

It is found in the cell inner membrane. Its function is as follows. Produces ATP from ADP in the presence of a proton gradient across the membrane. The gamma chain is believed to be important in regulating ATPase activity and the flow of protons through the CF(0) complex. This Variovorax paradoxus (strain S110) protein is ATP synthase gamma chain.